The following is a 1665-amino-acid chain: Protein scribble homolog (1665 aa).

Residues 1–804 (MLKCIPLWRC…MRVWRERMVE (804 aa)) form a sufficient for targeting to adherens junction and to inhibit cell proliferation region. The residue at position 37 (S37) is a Phosphoserine. LRR repeat units lie at residues 37-58 (SLEE…FFRL), 60-81 (NLRK…VANF), 83-104 (QLVE…IKFC), 106-127 (ALEI…FTQL), 129-150 (SLAH…VGNL), 152-174 (NLVT…SFLV), 175-197 (KLEQ…GALP), 198-219 (NLRE…LGNL), 221-243 (RLVC…GGLA), 244-265 (LLTD…IGQL), 267-288 (QLSI…IGDC), 290-312 (NLSE…GKLT), 313-334 (KLTN…IGGC), 336-357 (ALSV…LAHT), 359-381 (ELHV…THLN), and 382-402 (LKAL…QTED). A Phosphothreonine modification is found at T378. Disordered regions lie at residues 422 to 615 (PSLE…HFKI) and 635 to 689 (REGP…SAPS). Residues 428-437 (GQQSSPSESC) show a composition bias toward polar residues. Over residues 452 to 463 (DTLEGEEDAEEA) the composition is skewed to acidic residues. Residues 455 to 475 (EGEEDAEEAAAEKRGLQRRAT) are a coiled coil. A Phosphothreonine modification is found at T475. Composition is skewed to basic and acidic residues over residues 479 to 494 (SELK…RRNE) and 570 to 580 (FAEDTLIPRED). Position 583 is a phosphoserine (S583). Residues 653–687 (RAHEEEEEEEEENRDEEEGEATTEEDDKEEAVASA) adopt a coiled-coil conformation. Residues 657-681 (EEEEEEEENRDEEEGEATTEEDDKE) show a composition bias toward acidic residues. Phosphothreonine occurs at positions 674 and 675. Residues S694 and S750 each carry the phosphoserine modification. The interval 703 to 1215 (IEPARIEEEE…SLESISSIDR (513 aa)) is interaction with ARHGEF7. Positions 714–801 (TLTIVRQTGG…AVQMRVWRER (88 aa)) constitute a PDZ 1 domain. A required for interaction with VIM region spans residues 714–1180 (TLTIVRQTGG…TVLVCDGFDT (467 aa)). At T812 the chain carries Phosphothreonine. 3 positions are modified to phosphoserine: S821, S861, and S925. PDZ domains lie at 848–936 (AACL…ERET), 990–1079 (EICL…RRDP), and 1086–1180 (ELCI…GFDT). A phosphoserine mark is found at S1126, S1206, S1209, S1212, S1218, S1262, S1265, and S1284. Over residues 1213–1228 (IDRELSPEGPGKEKEL) the composition is skewed to basic and acidic residues. The tract at residues 1213 to 1246 (IDRELSPEGPGKEKELASQALPWESESAETTGRN) is disordered. 2 disordered regions span residues 1263-1325 (AGSL…DELP) and 1341-1501 (VHPP…AERR). Residues 1264 to 1277 (GSLQRGPSATTGGK) are compositionally biased toward polar residues. Residue K1291 is modified to Omega-N-methylarginine. A1299 bears the Phosphoserine mark. At R1312 the chain carries Omega-N-methylarginine. Residue S1320 is modified to Phosphoserine. Residue T1353 is modified to Phosphothreonine. S1359 carries the phosphoserine modification. Basic and acidic residues predominate over residues 1364–1376 (SFRERQKYFELEV). Position 1389 is a phosphoserine (S1389). The stretch at 1390–1421 (LVGADDLRKMQEEEARKLQQKRAQMLREEAVT) forms a coiled coil. Over residues 1394–1406 (DDLRKMQEEEARK) the composition is skewed to basic and acidic residues. A phosphoserine mark is found at S1455 and S1458. Residues 1471–1482 (AKAERRHQERLR) show a composition bias toward basic and acidic residues. A phosphoserine mark is found at S1485, S1496, and S1518. The tract at residues 1530 to 1577 (LSKSQEGRGKRGPLERLAEAPSPAPTPSPTPLEDFGLQTSASPGRLPL) is disordered. A compositionally biased stretch (basic and acidic residues) spans 1534–1547 (QEGRGKRGPLERLA). S1551 carries the post-translational modification Phosphoserine. T1555 carries the phosphothreonine modification. Phosphoserine occurs at positions 1557, 1571, and 1601. The segment at 1632–1665 (GRPSPGAVGPEDMTLCSSRRSVRPGRRGLGPVPS) is disordered.

It belongs to the LAP (LRR and PDZ) protein family. In terms of assembly, interacts with UBE3A. Interacts with PAK1 and PAK2. Interacts (via PDZ domains) with VANGL2. Interacts (via PDZ domains) with LPP and TRIP6; the interaction is direct. Interacts (via PDZ domains) with TJP2. Interacts (via PDZ domains) with APC; may mediate APC targeting to adherens junctions of epithelial cells. Interacts (via PDZ domains) with TSHR; regulates TSHR trafficking and function. Interacts with ARHGEF7 and GIT1; interacts directly with ARHGEF7. Interacts with CTNNB1. Interacts with MAPK12. Interacts (via PDZ domains 1 and 3) with MCC. Interacts with DLG5. Interacts with STK4/MST1 and LATS1 in the presence of DLG5. Interacts (via PDZ domain 3) with CRTAM (via PDZ-binding motif); the interaction promotes CRTAM and SCRIB polarization in a subset of CD4+ T-cells. Interacts with YES1, when YES1 is in a closed conformation; the interaction facilitates YES1 autophosphorylation. Interacts (via PDZ domains) with VIM; the interaction protects SCRIB from proteasomal degradation and facilitates SCRIB localization to intermediate filaments, the interaction is reduced by cell contact inhibition. Ubiquitinated; targeted for UBE3A-dependent multiubiquitination and degraded. Post-translationally, palmitoylated. Could be depalmitoylated by LYPLA1 and/or LYPLA2. Palmitoylation of SCRIB by ZDHHC7 is required for its localization to cell-cell junctions, function in the establishement of epithelial cell polarity and the regulation of downstream signaling pathways important for epithelial cell differentiation. As to expression, expressed in CD4+ T-cells (at protein level). Found in a wide range of tissues including liver, kidney and spleen. Also expressed in the brain (at protein level).

It is found in the cell membrane. It localises to the cell junction. The protein localises to the adherens junction. Its subcellular location is the cell projection. The protein resides in the lamellipodium. It is found in the cytoplasm. It localises to the postsynapse. The protein localises to the presynapse. Functionally, scaffold protein involved in different aspects of polarized cell differentiation regulating epithelial and neuronal morphogenesis and T-cell polarization. Via its interaction with CRTAM, required for the late phase polarization of a subset of CD4+ T-cells, which in turn regulates TCR-mediated proliferation and IFNG and IL22 production. Plays a role in cell directional movement, cell orientation, cell sheet organization and Golgi complex polarization at the cell migration front. Promotes epithelial cell layer barrier function via maintaining cell-cell adhesion. Most probably functions in the establishment of apico-basal cell polarity. May function in cell proliferation regulating progression from G1 to S phase and as a positive regulator of apoptosis for instance during acinar morphogenesis of the mammary epithelium. May regulate cell invasion via MAPK-mediated cell migration and adhesion. May play a role in exocytosis and in the targeting of synaptic vesicles to synapses. Functions as an activator of Rac GTPase activity. The protein is Protein scribble homolog of Mus musculus (Mouse).